A 253-amino-acid polypeptide reads, in one-letter code: Tryptophan synthase alpha chain (253 aa).

Active-site proton acceptor residues include Glu-46 and Asp-57.

It belongs to the TrpA family. As to quaternary structure, tetramer of two alpha and two beta chains.

The enzyme catalyses (1S,2R)-1-C-(indol-3-yl)glycerol 3-phosphate + L-serine = D-glyceraldehyde 3-phosphate + L-tryptophan + H2O. Its pathway is amino-acid biosynthesis; L-tryptophan biosynthesis; L-tryptophan from chorismate: step 5/5. In terms of biological role, the alpha subunit is responsible for the aldol cleavage of indoleglycerol phosphate to indole and glyceraldehyde 3-phosphate. This is Tryptophan synthase alpha chain from Dictyoglomus turgidum (strain DSM 6724 / Z-1310).